A 304-amino-acid polypeptide reads, in one-letter code: UDP-3-O-acyl-N-acetylglucosamine deacetylase (304 aa).

Residues H79, H238, and D242 each contribute to the Zn(2+) site. The active-site Proton donor is the H265.

This sequence belongs to the LpxC family. Requires Zn(2+) as cofactor.

The enzyme catalyses a UDP-3-O-[(3R)-3-hydroxyacyl]-N-acetyl-alpha-D-glucosamine + H2O = a UDP-3-O-[(3R)-3-hydroxyacyl]-alpha-D-glucosamine + acetate. Its pathway is glycolipid biosynthesis; lipid IV(A) biosynthesis; lipid IV(A) from (3R)-3-hydroxytetradecanoyl-[acyl-carrier-protein] and UDP-N-acetyl-alpha-D-glucosamine: step 2/6. Its function is as follows. Catalyzes the hydrolysis of UDP-3-O-myristoyl-N-acetylglucosamine to form UDP-3-O-myristoylglucosamine and acetate, the committed step in lipid A biosynthesis. The polypeptide is UDP-3-O-acyl-N-acetylglucosamine deacetylase (Photobacterium profundum (strain SS9)).